Reading from the N-terminus, the 447-residue chain is Chaperone protein dnaJ A7B, chloroplastic (447 aa).

Residues 1–86 (MALLQFGGTL…HRRSSRFIVR (86 aa)) constitute a chloroplast transit peptide. Residues 90–154 (DFYSTLGVSR…EKRSIYDKYG (65 aa)) enclose the J domain. The segment at 217–298 (GVEKEIEITR…CGGDGRVRKT (82 aa)) adopts a CR-type zinc-finger fold. Cysteine 230, cysteine 233, cysteine 247, cysteine 250, cysteine 273, cysteine 276, cysteine 286, and cysteine 289 together coordinate Zn(2+). CXXCXGXG motif repeat units lie at residues 230–237 (CNTCDGTG), 247–254 (CKTCGGQG), 273–280 (CNTCGGTG), and 286–293 (CNTCGGDG).

It belongs to the DnaJ family. Interacts with PCNA. As to expression, expressed in roots, stems, leaves and panicles.

Its subcellular location is the plastid. The protein localises to the chloroplast. Plays pivotal roles in chloroplast development. Is essential for the regulation of chloroplast development and differentiation. The protein is Chaperone protein dnaJ A7B, chloroplastic of Oryza sativa subsp. japonica (Rice).